A 60-amino-acid chain; its full sequence is Large ribosomal subunit protein bL32c (60 aa).

The protein belongs to the bacterial ribosomal protein bL32 family.

It is found in the plastid. Its subcellular location is the chloroplast. The protein is Large ribosomal subunit protein bL32c of Psilotum nudum (Whisk fern).